Here is a 418-residue protein sequence, read N- to C-terminus: Voltage-gated ClC-type chloride channel ClcB (418 aa).

Transmembrane regions (helical) follow at residues 5-25, 54-74, 146-166, 168-188, 222-242, 258-278, 291-311, 316-336, 352-372, and 380-400; these read LLIATVVGILAAFAVAGFRHA, LLTPALGGLAAGLLLMGWQKF, LWIACGAAAGMAAAYRAPLAG, LFIAEVLFGTMMLASLGPVII, ALIISTGVLAGLCGPLLLTLM, WQLALGGVIVGLLSLFTPAVW, APPLLMIIAGIFLCKLCAVLA, GAPGGVFTPTLFIGLAIGMLY, LLLGLTEMATLLAATTHAPIM, and MTGEYQLLPGLLIACVIASVI.

It belongs to the chloride channel (TC 2.A.49) family. ClcB subfamily.

The protein localises to the cell inner membrane. In terms of biological role, probably acts as an electrical shunt for an outwardly-directed proton pump that is linked to amino acid decarboxylation, as part of the extreme acid resistance (XAR) response. This Shigella boydii serotype 18 (strain CDC 3083-94 / BS512) protein is Voltage-gated ClC-type chloride channel ClcB.